A 330-amino-acid polypeptide reads, in one-letter code: FKBP12-interacting protein of 37 kDa (330 aa).

N-acetylmethionine is present on methionine 1. Positions 1 to 12 (MEFSSQDDDFGG) are enriched in acidic residues. A disordered region spans residues 1-43 (MEFSSQDDDFGGDDSAANATRASGNRRSFGDLEDDEDDIFGST). A compositionally biased stretch (polar residues) spans 17-26 (ANATRASGNR). Residues 56–308 (SLRGSLKNCK…KGLEIVSELV (253 aa)) are a coiled coil.

The protein belongs to the fl(2)d family. In terms of assembly, forms homodimers. Interacts with MTA/EMB1706. Interacts with FKBP12; interaction is inhibited by the immunosuppressive drug FK506. Interacts with VIR. Associates with MTA, MTB, VIR and HAKAI to form the m6A writer complex which is essential for adenosine methylation at specific mRNA sequences. Ubiquitously expressed with higher levels in primary and lateral roots, leaves, trichomes, and in pollen grains (at protein level).

Its subcellular location is the nucleus speckle. The protein localises to the nucleus. It localises to the nucleoplasm. Functionally, probable regulatory subunit of the N6-methyltransferase complex, a multiprotein complex that mediates N6-methyladenosine (m6A) methylation at the 5'-[AG]GAC-3' consensus sites of some mRNAs. Associates with MTA, MTB, VIR and HAKAI to form the m6A writer complex which is essential for adenosine methylation at specific mRNA sequences. N6-methyladenosine (m6A) plays a role in mRNA stability, processing, translation efficiency and editing. Essential protein required during endosperm development and embryogenesis. Involved in endoreduplication, especially in trichomes. May play a role in splicing events. This is FKBP12-interacting protein of 37 kDa from Arabidopsis thaliana (Mouse-ear cress).